The primary structure comprises 332 residues: Holliday junction branch migration complex subunit RuvB (332 aa).

The tract at residues 1–181 (MTRFLDSDAM…FGITGHMEYY (181 aa)) is large ATPase domain (RuvB-L). ATP contacts are provided by residues L20, R21, G62, K65, T66, T67, 128–130 (EDF), R171, Y181, and R218. T66 contributes to the Mg(2+) binding site. The small ATPAse domain (RuvB-S) stretch occupies residues 182–252 (EENDLTEIIE…ITDKALTMLD (71 aa)). A head domain (RuvB-H) region spans residues 255–332 (HEGLDYVDQK…EHLGYQRFDK (78 aa)). The DNA site is built by R291, R310, R312, and R315.

This sequence belongs to the RuvB family. In terms of assembly, homohexamer. Forms an RuvA(8)-RuvB(12)-Holliday junction (HJ) complex. HJ DNA is sandwiched between 2 RuvA tetramers; dsDNA enters through RuvA and exits via RuvB. An RuvB hexamer assembles on each DNA strand where it exits the tetramer. Each RuvB hexamer is contacted by two RuvA subunits (via domain III) on 2 adjacent RuvB subunits; this complex drives branch migration. In the full resolvosome a probable DNA-RuvA(4)-RuvB(12)-RuvC(2) complex forms which resolves the HJ.

It localises to the cytoplasm. It carries out the reaction ATP + H2O = ADP + phosphate + H(+). Functionally, the RuvA-RuvB-RuvC complex processes Holliday junction (HJ) DNA during genetic recombination and DNA repair, while the RuvA-RuvB complex plays an important role in the rescue of blocked DNA replication forks via replication fork reversal (RFR). RuvA specifically binds to HJ cruciform DNA, conferring on it an open structure. The RuvB hexamer acts as an ATP-dependent pump, pulling dsDNA into and through the RuvAB complex. RuvB forms 2 homohexamers on either side of HJ DNA bound by 1 or 2 RuvA tetramers; 4 subunits per hexamer contact DNA at a time. Coordinated motions by a converter formed by DNA-disengaged RuvB subunits stimulates ATP hydrolysis and nucleotide exchange. Immobilization of the converter enables RuvB to convert the ATP-contained energy into a lever motion, pulling 2 nucleotides of DNA out of the RuvA tetramer per ATP hydrolyzed, thus driving DNA branch migration. The RuvB motors rotate together with the DNA substrate, which together with the progressing nucleotide cycle form the mechanistic basis for DNA recombination by continuous HJ branch migration. Branch migration allows RuvC to scan DNA until it finds its consensus sequence, where it cleaves and resolves cruciform DNA. The polypeptide is Holliday junction branch migration complex subunit RuvB (Streptococcus agalactiae serotype Ia (strain ATCC 27591 / A909 / CDC SS700)).